The chain runs to 198 residues: Phycocyanobilin lyase CpcT homolog (198 aa).

It belongs to the CpcT/CpeT biliprotein lyase family.

Functionally, covalently attaches a chromophore to Cys residue(s) of phycobiliproteins. In vitro is not seen to act as a chromophore lyase for ApcA1, ApcA2, ApcB, ApcD, ApcF, CpcB or PecB, the lyase activity is therefore unsure. This chain is Phycocyanobilin lyase CpcT homolog (cpcT2), found in Nostoc sp. (strain PCC 7120 / SAG 25.82 / UTEX 2576).